The sequence spans 406 residues: Riboflavin biosynthesis protein RibBA (406 aa).

Residues 1 to 209 (MSEREEFKFN…IADLIKYRLR (209 aa)) form a DHBP synthase region. D-ribulose 5-phosphate is bound by residues 33–34 (RE), Asp38, 148–152 (RAGHT), and Glu172. Position 34 (Glu34) interacts with Mg(2+). His151 contributes to the Mg(2+) binding site. A GTP cyclohydrolase II region spans residues 210-406 (RETLVEKVAS…VKKDKLGHMF (197 aa)). Position 260-264 (260-264 (RVHSE)) interacts with GTP. Residues Cys265, Cys276, and Cys278 each coordinate Zn(2+). GTP is bound by residues Gln281, 304-306 (EGR), and Thr326. Asp338 serves as the catalytic Proton acceptor; for GTP cyclohydrolase activity. The active-site Nucleophile; for GTP cyclohydrolase activity is the Arg340. Positions 361 and 366 each coordinate GTP.

This sequence in the N-terminal section; belongs to the DHBP synthase family. It in the C-terminal section; belongs to the GTP cyclohydrolase II family. Mg(2+) is required as a cofactor. Mn(2+) serves as cofactor. The cofactor is Zn(2+).

The catalysed reaction is D-ribulose 5-phosphate = (2S)-2-hydroxy-3-oxobutyl phosphate + formate + H(+). It carries out the reaction GTP + 4 H2O = 2,5-diamino-6-hydroxy-4-(5-phosphoribosylamino)-pyrimidine + formate + 2 phosphate + 3 H(+). The protein operates within cofactor biosynthesis; riboflavin biosynthesis; 2-hydroxy-3-oxobutyl phosphate from D-ribulose 5-phosphate: step 1/1. Its pathway is cofactor biosynthesis; riboflavin biosynthesis; 5-amino-6-(D-ribitylamino)uracil from GTP: step 1/4. In terms of biological role, catalyzes the conversion of D-ribulose 5-phosphate to formate and 3,4-dihydroxy-2-butanone 4-phosphate. Catalyzes the conversion of GTP to 2,5-diamino-6-ribosylamino-4(3H)-pyrimidinone 5'-phosphate (DARP), formate and pyrophosphate. In Aquifex aeolicus (strain VF5), this protein is Riboflavin biosynthesis protein RibBA.